We begin with the raw amino-acid sequence, 259 residues long: Deoxyribose-phosphate aldolase (259 aa).

The active-site Proton donor/acceptor is Asp-102. Lys-167 serves as the catalytic Schiff-base intermediate with acetaldehyde. Lys-201 serves as the catalytic Proton donor/acceptor.

This sequence belongs to the DeoC/FbaB aldolase family. DeoC type 2 subfamily.

It is found in the cytoplasm. The enzyme catalyses 2-deoxy-D-ribose 5-phosphate = D-glyceraldehyde 3-phosphate + acetaldehyde. The protein operates within carbohydrate degradation; 2-deoxy-D-ribose 1-phosphate degradation; D-glyceraldehyde 3-phosphate and acetaldehyde from 2-deoxy-alpha-D-ribose 1-phosphate: step 2/2. Functionally, catalyzes a reversible aldol reaction between acetaldehyde and D-glyceraldehyde 3-phosphate to generate 2-deoxy-D-ribose 5-phosphate. The protein is Deoxyribose-phosphate aldolase of Escherichia coli (strain SMS-3-5 / SECEC).